Reading from the N-terminus, the 515-residue chain is N-fatty-acyl-amino acid synthase/hydrolase PM20D1.1 (515 aa).

The first 34 residues, 1 to 34 (MKTKFTKKTVLKFFGILFAILLLSVLILFSVVIG), serve as a signal peptide directing secretion. N-linked (GlcNAc...) asparagine glycosylation is found at N50, N87, and N118. Position 140 (H140) interacts with Zn(2+). D142 is an active-site residue. D173 serves as a coordination point for Zn(2+). The Proton acceptor role is filled by E207. 3 residues coordinate Zn(2+): E208, D234, and H480.

Belongs to the peptidase M20A family. The cofactor is Zn(2+).

Its subcellular location is the secreted. The enzyme catalyses an N-acyl-L-amino acid + H2O = an L-alpha-amino acid + a carboxylate. It carries out the reaction an N-acyl-aromatic L-alpha-amino acid + H2O = an aromatic L-alpha-amino acid + a carboxylate. It catalyses the reaction N-(5Z,8Z,11Z,14Z)-eicosatetraenoyl-glycine + H2O = (5Z,8Z,11Z,14Z)-eicosatetraenoate + glycine. The catalysed reaction is N-hexadecanoyl-L-phenylalanine + H2O = hexadecanoate + L-phenylalanine. The enzyme catalyses N-octadecanoyl-L-phenylalanine + H2O = octadecanoate + L-phenylalanine. It carries out the reaction N-(4Z,7Z,10Z,13Z,16Z,19Z-docosahexaenoyl)-L-phenylalanine + H2O = (4Z,7Z,10Z,13Z,16Z,19Z)-docosahexaenoate + L-phenylalanine. It catalyses the reaction N-(9Z-octadecenoyl)-L-asparagine + H2O = L-asparagine + (9Z)-octadecenoate. The catalysed reaction is (9Z)-octadecenoate + glycine = N-(9Z-octadecenoyl)glycine + H2O. The enzyme catalyses N-(9Z-octadecenoyl)-L-lysine + H2O = L-lysine + (9Z)-octadecenoate. It carries out the reaction N-(9Z-octadecenoyl)-L-methionine + H2O = (9Z)-octadecenoate + L-methionine. It catalyses the reaction N-(9Z-octadecenoyl)-L-serine + H2O = L-serine + (9Z)-octadecenoate. The catalysed reaction is N-(9Z-octadecenoyl)-L-tryptophan + H2O = L-tryptophan + (9Z)-octadecenoate. The enzyme catalyses N-(9Z-octadecenoyl)-L-tyrosine + H2O = L-tyrosine + (9Z)-octadecenoate. It carries out the reaction N-(9Z-octadecenoyl)-L-glutamine + H2O = L-glutamine + (9Z)-octadecenoate. It catalyses the reaction N-(5Z,8Z,11Z,14Z-eicosatetraenoyl)-L-serine + H2O = (5Z,8Z,11Z,14Z)-eicosatetraenoate + L-serine. The catalysed reaction is (5Z,8Z,11Z,14Z)-eicosatetraenoate + L-phenylalanine = N-(5Z,8Z,11Z,14Z-eicosatetraenoyl)-L-phenylalanine + H2O. The enzyme catalyses N-(9Z-octadecenoyl)-L-leucine + H2O = L-leucine + (9Z)-octadecenoate. It carries out the reaction L-phenylalanine + (9Z)-octadecenoate = N-(9Z-octadecenoyl)-L-phenylalanine + H2O. The protein operates within amino-acid metabolism. Its pathway is energy metabolism; electron transfer. It participates in lipid metabolism; fatty acid metabolism. With respect to regulation, lipoproteins are powerful coactivators of PM20D1 activity in vitro and NAA biosynthesis in vivo. Its function is as follows. Secreted enzyme that regulates the endogenous N-fatty acyl amino acid (NAAs) tissue and circulating levels by functioning as a bidirectional NAA synthase/hydrolase. It condenses free fatty acids and free amino acids to generate NAAs and bidirectionally catalyzes the reverse hydrolysis reaction. Some of these NAAs stimulate oxidative metabolism via mitochondrial uncoupling, increasing energy expenditure in a UPC1-independent manner. Thereby, this secreted protein may indirectly regulate whole body energy expenditure. PM20D1 circulates in tight association with both low- and high-density (LDL and HDL,respectively) lipoprotein particles. The polypeptide is N-fatty-acyl-amino acid synthase/hydrolase PM20D1.1 (Danio rerio (Zebrafish)).